Here is a 376-residue protein sequence, read N- to C-terminus: Glucose-1-phosphate adenylyltransferase (376 aa).

Residues Tyr-101, Gly-166, 181–182, and Ser-192 contribute to the alpha-D-glucose 1-phosphate site; that span reads EK.

This sequence belongs to the bacterial/plant glucose-1-phosphate adenylyltransferase family. In terms of assembly, homotetramer.

It catalyses the reaction alpha-D-glucose 1-phosphate + ATP + H(+) = ADP-alpha-D-glucose + diphosphate. It functions in the pathway glycan biosynthesis; glycogen biosynthesis. In terms of biological role, involved in the biosynthesis of ADP-glucose, a building block required for the elongation reactions to produce glycogen. Catalyzes the reaction between ATP and alpha-D-glucose 1-phosphate (G1P) to produce pyrophosphate and ADP-Glc. The chain is Glucose-1-phosphate adenylyltransferase from Bacillus cereus (strain ATCC 14579 / DSM 31 / CCUG 7414 / JCM 2152 / NBRC 15305 / NCIMB 9373 / NCTC 2599 / NRRL B-3711).